We begin with the raw amino-acid sequence, 73 residues long: Large ribosomal subunit protein uL24 (73 aa).

Positions 51–65 (DDNPKGGFIHKEKPM) are enriched in basic and acidic residues. Residues 51 to 73 (DDNPKGGFIHKEKPMHISNVKKA) form a disordered region.

The protein belongs to the universal ribosomal protein uL24 family. As to quaternary structure, part of the 50S ribosomal subunit.

In terms of biological role, one of two assembly initiator proteins, it binds directly to the 5'-end of the 23S rRNA, where it nucleates assembly of the 50S subunit. One of the proteins that surrounds the polypeptide exit tunnel on the outside of the subunit. The protein is Large ribosomal subunit protein uL24 of Helicobacter pylori (strain Shi470).